A 298-amino-acid polypeptide reads, in one-letter code: Pyridoxal kinase PdxY (298 aa).

Ser-17 is a substrate binding site. Positions 119 and 156 each coordinate ATP. Asp-234 provides a ligand contact to substrate.

It belongs to the pyridoxine kinase family. PdxY subfamily. As to quaternary structure, homodimer. Mg(2+) serves as cofactor.

The catalysed reaction is pyridoxal + ATP = pyridoxal 5'-phosphate + ADP + H(+). The protein operates within cofactor metabolism; pyridoxal 5'-phosphate salvage; pyridoxal 5'-phosphate from pyridoxal: step 1/1. Functionally, pyridoxal kinase involved in the salvage pathway of pyridoxal 5'-phosphate (PLP). Catalyzes the phosphorylation of pyridoxal to PLP. The chain is Pyridoxal kinase PdxY from Deinococcus radiodurans (strain ATCC 13939 / DSM 20539 / JCM 16871 / CCUG 27074 / LMG 4051 / NBRC 15346 / NCIMB 9279 / VKM B-1422 / R1).